The primary structure comprises 182 residues: MFNAKHFFNLGLGFQWLQKRGIGSLKRPYNFPKPVPGPKHKDVLSLFEKKCRSVLDEQSERFKMFHRSQPNRVRPGAVLLVESYSKYPSKDSVNRFAGYLLRIRHRGPKSSILLRNVVMGVGVEYLLPIYSPQIKRIVVLKENGLSKRPRRAYLSYLRQPRFRLPPVESLVRKYIEQNQHKP.

A mitochondrion-targeting transit peptide spans 1-21; sequence MFNAKHFFNLGLGFQWLQKRG.

It belongs to the bacterial ribosomal protein bL19 family. Component of the mitochondrial large ribosomal subunit (mt-LSU). Mature yeast 74S mitochondrial ribosomes consist of a small (37S) and a large (54S) subunit. The 37S small subunit contains a 15S ribosomal RNA (15S mt-rRNA) and at least 32 different proteins. The 54S large subunit contains a 21S rRNA (21S mt-rRNA) and at least 45 different proteins.

Its subcellular location is the mitochondrion. Functionally, component of the mitochondrial ribosome (mitoribosome), a dedicated translation machinery responsible for the synthesis of mitochondrial genome-encoded proteins, including at least some of the essential transmembrane subunits of the mitochondrial respiratory chain. The mitoribosomes are attached to the mitochondrial inner membrane and translation products are cotranslationally integrated into the membrane. bL19m is essential for respiration. The protein is Large ribosomal subunit protein bL19m (img1) of Schizosaccharomyces pombe (strain 972 / ATCC 24843) (Fission yeast).